Reading from the N-terminus, the 552-residue chain is Arginine--tRNA ligase (552 aa).

Residues 130 to 140 (ANPTGPLSIGH) carry the 'HIGH' region motif.

This sequence belongs to the class-I aminoacyl-tRNA synthetase family. As to quaternary structure, monomer.

Its subcellular location is the cytoplasm. The enzyme catalyses tRNA(Arg) + L-arginine + ATP = L-arginyl-tRNA(Arg) + AMP + diphosphate. The chain is Arginine--tRNA ligase from Desulfotalea psychrophila (strain LSv54 / DSM 12343).